Reading from the N-terminus, the 200-residue chain is Dephospho-CoA kinase (200 aa).

The 198-residue stretch at 3–200 (VLGLTGSIGM…LSGKPAAATR (198 aa)) folds into the DPCK domain. An ATP-binding site is contributed by 11 to 16 (GMGKTT).

This sequence belongs to the CoaE family.

Its subcellular location is the cytoplasm. The enzyme catalyses 3'-dephospho-CoA + ATP = ADP + CoA + H(+). The protein operates within cofactor biosynthesis; coenzyme A biosynthesis; CoA from (R)-pantothenate: step 5/5. Its function is as follows. Catalyzes the phosphorylation of the 3'-hydroxyl group of dephosphocoenzyme A to form coenzyme A. The polypeptide is Dephospho-CoA kinase (Brucella abortus (strain 2308)).